Consider the following 436-residue polypeptide: GTPase Der (436 aa).

EngA-type G domains follow at residues 4–167 (PTVA…PVEE) and 175–351 (IRFS…ESQN). Residues 10 to 17 (GRPNVGKS), 57 to 61 (DTGGI), 119 to 122 (NKVD), 181 to 188 (GRPNVGKS), 229 to 233 (DTAGM), and 294 to 297 (NKWD) contribute to the GTP site. The KH-like domain occupies 352-436 (KRIPSAVLND…PIHLIARKRK (85 aa)).

Belongs to the TRAFAC class TrmE-Era-EngA-EngB-Septin-like GTPase superfamily. EngA (Der) GTPase family. Associates with the 50S ribosomal subunit.

Its function is as follows. GTPase that plays an essential role in the late steps of ribosome biogenesis. The protein is GTPase Der of Streptococcus pyogenes serotype M28 (strain MGAS6180).